A 144-amino-acid chain; its full sequence is Cell division protein SepF (144 aa).

Residues 21 to 38 (TDLQGTKTTDEVSPTSRP) show a composition bias toward polar residues. Residues 21 to 40 (TDLQGTKTTDEVSPTSRPDN) are disordered.

The protein belongs to the SepF family. Homodimer. Interacts with FtsZ.

Its subcellular location is the cytoplasm. Its function is as follows. Cell division protein that is part of the divisome complex and is recruited early to the Z-ring. Probably stimulates Z-ring formation, perhaps through the cross-linking of FtsZ protofilaments. Its function overlaps with FtsA. In Latilactobacillus sakei subsp. sakei (strain 23K) (Lactobacillus sakei subsp. sakei), this protein is Cell division protein SepF.